We begin with the raw amino-acid sequence, 512 residues long: Sugar transport protein MST7 (512 aa).

Residues 1-17 (MENAGAGDGAPKHYPGK) lie on the Cytoplasmic side of the membrane. The chain crosses the membrane as a helical span at residues 18–38 (MTVFVFIACLVASSGGLIFGY). Topologically, residues 39 to 81 (DIGISGGVTSMDPFLSRFFPSVYAKEKEVVDTNQYCKFDSEPL) are extracellular. Residues 82–102 (TLFTSSLYLAALIASLFASVI) form a helical membrane-spanning segment. Topologically, residues 103-116 (TRKLGRKMTMLGGG) are cytoplasmic. A helical membrane pass occupies residues 117-137 (FIFLIGAVLNGAAVNVAMLII). At 138-139 (GR) the chain is on the extracellular side. Residues 140 to 160 (ILLGIGVGFSIQAVPLYLSEM) traverse the membrane as a helical segment. The Cytoplasmic segment spans residues 161-166 (APAKMR). Residues 167–187 (GMLNIIFQLMITVGILFANLI) form a helical membrane-spanning segment. The Extracellular portion of the chain corresponds to 188–201 (NYFTDKIAGGWGWR). A helical transmembrane segment spans residues 202 to 222 (VSLGLAAVPAVIMTVGSILLP). The Cytoplasmic portion of the chain corresponds to 223–294 (DTPNSLLSRG…MSVLIPTLQQ (72 aa)). A helical transmembrane segment spans residues 295 to 315 (LTGINVVMFYAPVLFKTIGFG). At 316 to 320 (GTASL) the chain is on the extracellular side. A helical membrane pass occupies residues 321 to 341 (MSAVITGLVNMFATFVSIATV). Topologically, residues 342–347 (DRFGRR) are cytoplasmic. Residues 348 to 368 (VLFIQGGIQMIIAQFILGTLI) form a helical membrane-spanning segment. The Extracellular segment spans residues 369 to 385 (AVKFGTAGVANISQGYA). The helical transmembrane segment at 386–406 (IVVVLFICLFVSAFAWSWGPL) threads the bilayer. Residues 407–425 (GWLVPSEIFPLEIRSAAQS) are Cytoplasmic-facing. The chain crosses the membrane as a helical span at residues 426–446 (VVVVFNMAFTFFIAQIFLMML). Over 447 to 450 (CRLK) the chain is Extracellular. The helical transmembrane segment at 451 to 471 (FGLFFFFGAMELIMTGFVLVF) threads the bilayer. Over 472–512 (LPETKGIPIEEMDRIWGEHWYWSRFVGAGRNRVMQMASTNV) the chain is Cytoplasmic.

Belongs to the major facilitator superfamily. Sugar transporter (TC 2.A.1.1) family.

The protein resides in the membrane. Mediates active uptake of hexoses by sugar:proton symport. The protein is Sugar transport protein MST7 of Oryza sativa subsp. japonica (Rice).